The chain runs to 405 residues: Dynactin subunit 2 (405 aa).

The tract at residues 1 to 24 (MADPKYADLPGIARNEPDVYETSD) is disordered. Positions 101 to 134 (PQQKYQRLLHEIQELTQEVEKAQSTVKESAAEEK) form a coiled coil. Positions 186-207 (AKTRKNPEGKSPAKGPGPDNEN) are disordered. Positions 383–403 (KENLATVEDNFTSIDARIKKL) form a coiled coil.

Belongs to the dynactin subunit 2 family. In terms of assembly, subunit of dynactin, a multiprotein complex part of a tripartite complex with dynein and a adapter, such as BICDL1, BICD2 or HOOK3. The dynactin complex is built around ACTR1A/ACTB filament and consists of an actin-related filament composed of a shoulder domain, a pointed end and a barbed end. Its length is defined by its flexible shoulder domain. The soulder is composed of 2 DCTN1 subunits, 4 DCTN2 and 2 DCTN3.

The protein resides in the cytoplasm. It localises to the cytoskeleton. Its subcellular location is the microtubule organizing center. It is found in the centrosome. The protein localises to the membrane. Part of the dynactin complex that activates the molecular motor dynein for ultra-processive transport along microtubules. In the dynactin soulder domain, binds the ACTR1A filament and acts as a molecular ruler to determine the length. Modulates cytoplasmic dynein binding to an organelle, and plays a role in prometaphase chromosome alignment and spindle organization during mitosis. Involved in anchoring microtubules to centrosomes. The protein is Dynactin subunit 2 (dctn2) of Xenopus tropicalis (Western clawed frog).